We begin with the raw amino-acid sequence, 341 residues long: Glyceraldehyde-3-phosphate dehydrogenase 2 (341 aa).

NAD(+) contacts are provided by residues 13 to 14 (RI), aspartate 35, and lysine 85. D-glyceraldehyde 3-phosphate contacts are provided by residues 157 to 159 (SCT), threonine 188, 217 to 218 (TG), and arginine 240. Cysteine 158 (nucleophile) is an active-site residue. An NAD(+)-binding site is contributed by asparagine 322.

This sequence belongs to the glyceraldehyde-3-phosphate dehydrogenase family. Homotetramer.

The protein resides in the cytoplasm. The catalysed reaction is D-glyceraldehyde 3-phosphate + phosphate + NAD(+) = (2R)-3-phospho-glyceroyl phosphate + NADH + H(+). It participates in carbohydrate degradation; glycolysis; pyruvate from D-glyceraldehyde 3-phosphate: step 1/5. In Caenorhabditis briggsae, this protein is Glyceraldehyde-3-phosphate dehydrogenase 2.